A 275-amino-acid chain; its full sequence is MFKPKKKLGQCFLIDKNFVNKAVESANLTKDDVVLEIGLGKGILTEELAKNAKKVYVIEIDKSLEPYANKLKELYNNIEIIWGDALKVDLNKLDFNKVVANLPYQISSPITFKLIKRGFDLAVLMYQYEFAKRMVAKEGTKDYGRLSVAVQSRADVEIVAKVPPSAFYPKPKVYSAIVKIKPNKGKYHIENENFFDDFLRAIFQHRNKSVRKALIDSSKELNYNKDEMKKILEDFLNTNSEIKNLINEKVFKLSVKDIVNLSNEFYRFLQNRGRL.

Positions 13, 38, 59, 84, and 101 each coordinate S-adenosyl-L-methionine.

This sequence belongs to the class I-like SAM-binding methyltransferase superfamily. rRNA adenine N(6)-methyltransferase family. RsmA subfamily.

It localises to the cytoplasm. In terms of biological role, specifically dimethylates two adjacent adenosines in the loop of a conserved hairpin near the 3'-end of 16S rRNA in the 30S particle. May play a critical role in biogenesis of 30S subunits. In Methanocaldococcus jannaschii (strain ATCC 43067 / DSM 2661 / JAL-1 / JCM 10045 / NBRC 100440) (Methanococcus jannaschii), this protein is Probable ribosomal RNA small subunit methyltransferase A.